A 490-amino-acid chain; its full sequence is Colicin-10 (490 aa).

Polar residues predominate over residues 1 to 20 (MDKVTDNSPDVESTESTEGS). Disordered regions lie at residues 1 to 29 (MDKV…VDTG) and 146 to 171 (QKAR…EIAR). Positions 146–170 (QKAREEAEAAEKALREAERQRDEIA) are enriched in basic and acidic residues. The helical transmembrane segment at 447 to 467 (IVALMFSFIVGAPLGFWGIAI) threads the bilayer.

Belongs to the channel forming colicin family.

The protein localises to the host membrane. This colicin is a channel-forming colicin. This class of transmembrane toxins depolarize the cytoplasmic membrane, leading to dissipation of cellular energy. Its function is as follows. Colicins are polypeptide toxins produced by and active against E.coli and closely related bacteria. This Escherichia coli protein is Colicin-10 (cta).